The sequence spans 745 residues: Kinesin-like protein KIN-14M (745 aa).

The interval 1 to 31 is disordered; sequence MVGEMTNNGRIRPSFPVKDLTSNEGSEYGGP. The segment at 1-35 is globular; the sequence is MVGEMTNNGRIRPSFPVKDLTSNEGSEYGGPVEFT. Microtubule-binding stretches follow at residues 65–77 and 198–745; these read YVKR…RWFQ and SLQL…LSLG. Coiled coils occupy residues 76–223 and 259–389; these read FQEL…GEKE and KDEL…GNIR. The 338-residue stretch at 387–724 folds into the Kinesin motor domain; the sequence is NIRVFCRVRP…LRFAARVNAC (338 aa). Residue 472–479 participates in ATP binding; the sequence is GQTGSGKT.

Belongs to the TRAFAC class myosin-kinesin ATPase superfamily. Kinesin family. KIN-14 subfamily. In terms of assembly, bind to microtubules in an ATP-insensitive manner (in vitro). Homodimer and heterodimer with KIN14N/KATC (in vitro).

It localises to the cytoplasm. It is found in the cytoskeleton. The sequence is that of Kinesin-like protein KIN-14M from Arabidopsis thaliana (Mouse-ear cress).